A 479-amino-acid chain; its full sequence is Sulfate adenylyltransferase subunit 1 (479 aa).

The tr-type G domain occupies 25–239 (KSLLRFLTCG…EVLETVDIQR (215 aa)). The segment at 34–41 (GSVDDGKS) is G1. 34–41 (GSVDDGKS) provides a ligand contact to GTP. Positions 92 to 96 (GITID) are G2. A G3 region spans residues 113-116 (DTPG). GTP-binding positions include 113-117 (DTPGH) and 168-171 (NKMD). The interval 168–171 (NKMD) is G4. Residues 206–208 (SAL) form a G5 region.

It belongs to the TRAFAC class translation factor GTPase superfamily. Classic translation factor GTPase family. CysN/NodQ subfamily. As to quaternary structure, heterodimer composed of CysD, the smaller subunit, and CysN.

It catalyses the reaction sulfate + ATP + H(+) = adenosine 5'-phosphosulfate + diphosphate. It participates in sulfur metabolism; hydrogen sulfide biosynthesis; sulfite from sulfate: step 1/3. Functionally, with CysD forms the ATP sulfurylase (ATPS) that catalyzes the adenylation of sulfate producing adenosine 5'-phosphosulfate (APS) and diphosphate, the first enzymatic step in sulfur assimilation pathway. APS synthesis involves the formation of a high-energy phosphoric-sulfuric acid anhydride bond driven by GTP hydrolysis by CysN coupled to ATP hydrolysis by CysD. In Salmonella arizonae (strain ATCC BAA-731 / CDC346-86 / RSK2980), this protein is Sulfate adenylyltransferase subunit 1.